The following is a 241-amino-acid chain: Sugar fermentation stimulation protein homolog (241 aa).

This sequence belongs to the SfsA family.

This Trichormus variabilis (strain ATCC 29413 / PCC 7937) (Anabaena variabilis) protein is Sugar fermentation stimulation protein homolog.